We begin with the raw amino-acid sequence, 88 residues long: RNA-binding protein Hfq (88 aa).

The Sm domain maps to 9–68; that stretch reads DPFLNALRRERIPVSIYLVNGIKLQGQIESFDQFVILLKNTVNQMVYKHAISTVVPARAV. Positions 66–88 are disordered; it reads RAVSHHSASDRPQGERPQEKTEE. Positions 72 to 88 are enriched in basic and acidic residues; the sequence is SASDRPQGERPQEKTEE.

This sequence belongs to the Hfq family. In terms of assembly, homohexamer.

RNA chaperone that binds small regulatory RNA (sRNAs) and mRNAs to facilitate mRNA translational regulation in response to envelope stress, environmental stress and changes in metabolite concentrations. Also binds with high specificity to tRNAs. The chain is RNA-binding protein Hfq from Aliivibrio fischeri (strain ATCC 700601 / ES114) (Vibrio fischeri).